A 289-amino-acid chain; its full sequence is Enoyl-CoA hydratase domain-containing protein 3, mitochondrial (289 aa).

The transit peptide at 1–14 (MLLRGFSELLKCRG) directs the protein to the mitochondrion.

Belongs to the enoyl-CoA hydratase/isomerase family.

It is found in the mitochondrion. Functionally, may play a role in fatty acid biosynthesis and insulin sensitivity. The chain is Enoyl-CoA hydratase domain-containing protein 3, mitochondrial (echdc3) from Danio rerio (Zebrafish).